Consider the following 460-residue polypeptide: tRNA(Ile)-lysidine synthase (460 aa).

Position 30–35 (Ser-30–Ser-35) interacts with ATP.

The protein belongs to the tRNA(Ile)-lysidine synthase family.

The protein localises to the cytoplasm. The enzyme catalyses cytidine(34) in tRNA(Ile2) + L-lysine + ATP = lysidine(34) in tRNA(Ile2) + AMP + diphosphate + H(+). Ligates lysine onto the cytidine present at position 34 of the AUA codon-specific tRNA(Ile) that contains the anticodon CAU, in an ATP-dependent manner. Cytidine is converted to lysidine, thus changing the amino acid specificity of the tRNA from methionine to isoleucine. The chain is tRNA(Ile)-lysidine synthase from Yersinia pestis.